The following is a 968-amino-acid chain: Chaperone protein ClpB3, chloroplastic (968 aa).

Residues Met-1 to Arg-67 constitute a chloroplast transit peptide. Residues Thr-78–Lys-222 form the Clp R domain. Repeat stretches follow at residues Phe-82–Gln-147 and Leu-159–Lys-222. Residues Leu-237–Pro-485 form an i region. An ATP-binding site is contributed by Gly-282–Thr-289. Residues Leu-488–Met-606 are a coiled coil. The interval Val-611–Ser-802 is II. Gly-685–Thr-692 serves as a coordination point for ATP.

This sequence belongs to the ClpA/ClpB family.

The protein resides in the plastid. It is found in the chloroplast. Its function is as follows. Molecular chaperone essential for chloroplast development and seedling viability. Mediates internal thylakoid membrane formation and confers thermotolerance to chloroplasts during heat stress. In Arabidopsis thaliana (Mouse-ear cress), this protein is Chaperone protein ClpB3, chloroplastic (CLPB3).